Reading from the N-terminus, the 91-residue chain is C-C motif chemokine 5 (91 aa).

The first 23 residues, 1 to 23 (MKVSAAALCVILTTAALCVPASA), serve as a signal peptide directing secretion. 2 disulfides stabilise this stretch: Cys-33–Cys-57 and Cys-34–Cys-73.

The protein belongs to the intercrine beta (chemokine CC) family.

The protein resides in the secreted. Functionally, chemoattractant for blood monocytes, memory T-helper cells and eosinophils. Causes the release of histamine from basophils and activates eosinophils. May activate several chemokine receptors including CCR1, CCR3, CCR4 and CCR5. May also be an agonist of the G protein-coupled receptor GPR75. Together with GPR75, may play a role in neuron survival through activation of a downstream signaling pathway involving the PI3, Akt and MAP kinases. By activating GPR75 may also play a role in insulin secretion by islet cells. The protein is C-C motif chemokine 5 (CCL5) of Cavia porcellus (Guinea pig).